Here is a 373-residue protein sequence, read N- to C-terminus: Cytoplasmic tRNA 2-thiolation protein 1 (373 aa).

Belongs to the TtcA family. CTU1/NCS6/ATPBD3 subfamily.

The protein localises to the cytoplasm. Its pathway is tRNA modification; 5-methoxycarbonylmethyl-2-thiouridine-tRNA biosynthesis. Plays a central role in 2-thiolation of mcm(5)S(2)U at tRNA wobble positions of tRNA(Lys), tRNA(Glu) and tRNA(Gln). Directly binds tRNAs and probably acts by catalyzing adenylation of tRNAs, an intermediate required for 2-thiolation. It is unclear whether it acts as a sulfurtransferase that transfers sulfur from thiocarboxylated URM1 onto the uridine of tRNAs at wobble position. The chain is Cytoplasmic tRNA 2-thiolation protein 1 from Caenorhabditis elegans.